The primary structure comprises 650 residues: Chaperone protein DnaK (650 aa).

Thr-200 bears the Phosphothreonine; by autocatalysis mark. Low complexity predominate over residues 611 to 634; the sequence is AQQAGAAGAAGAAAEGASAQGGAQ. A disordered region spans residues 611 to 650; sequence AQQAGAAGAAGAAAEGASAQGGAQPPDDVVDADFKEVKKD.

The protein belongs to the heat shock protein 70 family.

Its function is as follows. Acts as a chaperone. This Burkholderia pseudomallei (strain 1710b) protein is Chaperone protein DnaK.